Here is a 378-residue protein sequence, read N- to C-terminus: Beta-1,3-galactosyltransferase pvg3 (378 aa).

Residues 1 to 8 lie on the Cytoplasmic side of the membrane; it reads MFSNSKKK. Residues 9 to 29 form a helical; Signal-anchor for type II membrane protein membrane-spanning segment; that stretch reads IFLYVLIAGVATFSFAFLVLN. Residues 30-378 lie on the Lumenal side of the membrane; it reads RLQAEEHSLA…ATIPLPSLDV (349 aa). Asn-53, Asn-97, Asn-180, and Asn-354 each carry an N-linked (GlcNAc...) asparagine glycan.

The protein belongs to the glycosyltransferase 31 family.

The protein resides in the endoplasmic reticulum membrane. The protein localises to the golgi apparatus. It localises to the golgi stack membrane. It carries out the reaction 3-O-(beta-D-galactosyl-(1-&gt;4)-beta-D-xylosyl)-L-seryl-[protein] + UDP-alpha-D-galactose = 3-O-(beta-D-galactosyl-(1-&gt;3)-beta-D-galactosyl-(1-&gt;4)-beta-D-xylosyl)-L-seryl-[protein] + UDP + H(+). Functionally, involved in cell wall biogenesis. Has a role in the addition of Gal-beta1,3 moeities to galactomannans and their subsequent pyruvylation. Has a role in meiosis. The polypeptide is Beta-1,3-galactosyltransferase pvg3 (pvg3) (Schizosaccharomyces pombe (strain 972 / ATCC 24843) (Fission yeast)).